We begin with the raw amino-acid sequence, 25 residues long: ATP-dependent 6-phosphofructokinase 2 (25 aa).

Gly11 lines the ATP pocket.

Belongs to the phosphofructokinase type A (PFKA) family. ATP-dependent PFK group I subfamily. Prokaryotic clade 'B1' sub-subfamily. Homotetramer. The cofactor is Mg(2+).

The protein localises to the cytoplasm. The catalysed reaction is beta-D-fructose 6-phosphate + ATP = beta-D-fructose 1,6-bisphosphate + ADP + H(+). It participates in carbohydrate degradation; glycolysis; D-glyceraldehyde 3-phosphate and glycerone phosphate from D-glucose: step 3/4. With respect to regulation, in contrast with PFK1 this enzyme is not affected by phosphoenolpyruvate. Its function is as follows. Catalyzes the phosphorylation of D-fructose 6-phosphate to fructose 1,6-bisphosphate by ATP, the first committing step of glycolysis. In Thermus thermophilus (strain ATCC 27634 / DSM 579 / HB8), this protein is ATP-dependent 6-phosphofructokinase 2 (pfkA2).